The sequence spans 302 residues: Phospho-N-acetylmuramoyl-pentapeptide-transferase (302 aa).

9 helical membrane-spanning segments follow: residues 1 to 21, 42 to 62, 68 to 88, 123 to 143, 154 to 174, 178 to 198, 204 to 224, 229 to 249, and 279 to 299; these read MIAA…KLFR, GTPT…GMIS, VLLG…LSVV, FFGF…LVIV, GLDG…WFFL, GVSE…LVFN, IFMG…VSVL, FYLV…ILQV, and IVAV…EIFG.

Belongs to the glycosyltransferase 4 family. MraY subfamily. Requires Mg(2+) as cofactor.

It is found in the cell inner membrane. The catalysed reaction is UDP-N-acetyl-alpha-D-muramoyl-L-alanyl-gamma-D-glutamyl-meso-2,6-diaminopimeloyl-D-alanyl-D-alanine + di-trans,octa-cis-undecaprenyl phosphate = di-trans,octa-cis-undecaprenyl diphospho-N-acetyl-alpha-D-muramoyl-L-alanyl-D-glutamyl-meso-2,6-diaminopimeloyl-D-alanyl-D-alanine + UMP. It participates in cell wall biogenesis; peptidoglycan biosynthesis. Functionally, catalyzes the initial step of the lipid cycle reactions in the biosynthesis of the cell wall peptidoglycan: transfers peptidoglycan precursor phospho-MurNAc-pentapeptide from UDP-MurNAc-pentapeptide onto the lipid carrier undecaprenyl phosphate, yielding undecaprenyl-pyrophosphoryl-MurNAc-pentapeptide, known as lipid I. This is Phospho-N-acetylmuramoyl-pentapeptide-transferase from Thermotoga petrophila (strain ATCC BAA-488 / DSM 13995 / JCM 10881 / RKU-1).